We begin with the raw amino-acid sequence, 89 residues long: Histone H3.v2 (89 aa).

This sequence belongs to the histone H3 family.

This is Histone H3.v2 (H3v2) from Dictyostelium discoideum (Social amoeba).